The following is a 427-amino-acid chain: Serine--tRNA ligase (427 aa).

Residue 232 to 234 (TAE) participates in L-serine binding. 263-265 (RSE) serves as a coordination point for ATP. An L-serine-binding site is contributed by Glu-286. 350 to 353 (EISS) lines the ATP pocket. Ser-385 contacts L-serine.

This sequence belongs to the class-II aminoacyl-tRNA synthetase family. Type-1 seryl-tRNA synthetase subfamily. In terms of assembly, homodimer. The tRNA molecule binds across the dimer.

Its subcellular location is the cytoplasm. The enzyme catalyses tRNA(Ser) + L-serine + ATP = L-seryl-tRNA(Ser) + AMP + diphosphate + H(+). The catalysed reaction is tRNA(Sec) + L-serine + ATP = L-seryl-tRNA(Sec) + AMP + diphosphate + H(+). Its pathway is aminoacyl-tRNA biosynthesis; selenocysteinyl-tRNA(Sec) biosynthesis; L-seryl-tRNA(Sec) from L-serine and tRNA(Sec): step 1/1. Functionally, catalyzes the attachment of serine to tRNA(Ser). Is also able to aminoacylate tRNA(Sec) with serine, to form the misacylated tRNA L-seryl-tRNA(Sec), which will be further converted into selenocysteinyl-tRNA(Sec). In Lacticaseibacillus casei (strain BL23) (Lactobacillus casei), this protein is Serine--tRNA ligase.